Here is a 313-residue protein sequence, read N- to C-terminus: Protein KRE1 (313 aa).

A signal peptide spans 1 to 26 (MMRRTLLHSFATLLLSLSLWSAAVMA). Copy 1 of the repeat occupies 72 to 86 (TTTNDVGTTVTLTQT). The 2 X approximate repeats stretch occupies residues 72-141 (TTTNDVGTTV…LGTTVTLTQT (70 aa)). The segment at 94–114 (PTTTTSTSSTGKTTTTVPTAT) is disordered. Repeat 2 spans residues 127–141 (TTTNDLGTTVTLTQT). A compositionally biased stretch (low complexity) spans 147–181 (TSATSSASSSVSSSVSSSGSSSSVKTTTSTGSAVA). Positions 147-198 (TSATSSASSSVSSSVSSSGSSSSVKTTTSTGSAVAETGTRPDPSTDFTEPPV) are disordered. The GPI-anchor amidated asparagine moiety is linked to residue N288. The propeptide at 289 to 313 (EAQHLGMSSFTSILGGLLTVLIWFL) is removed in mature form.

Belongs to the KRE1 family. In terms of processing, extensively modified; probably through addition of O-linked mannose residues. Post-translationally, the GPI-anchor is attached to the protein in the endoplasmic reticulum and serves to target the protein to the cell surface. There, the glucosamine-inositol phospholipid moiety is cleaved off and the GPI-modified mannoprotein is covalently attached via its lipidless GPI glycan remnant to the 1,6-beta-glucan of the outer cell wall layer.

It is found in the cell membrane. The protein localises to the secreted. It localises to the cell wall. In terms of biological role, involved in a late stage of cell wall 1,6-beta-glucan synthesis and assembly. Has a structural, rather than enzymic, function within cell wall 1,6-beta-glucan assembly and architecture, possibly by being involved in covalently cross-linking 1,6-beta-glucans to other cell wall components such as 1,3-beta-glucan, chitin and certain mannoproteins. Acts as the plasma membrane receptor for the yeast K1 viral toxin. In Saccharomyces cerevisiae (strain ATCC 204508 / S288c) (Baker's yeast), this protein is Protein KRE1 (KRE1).